Reading from the N-terminus, the 470-residue chain is N amino acid transport system protein (470 aa).

Residues 1–11 (MDSQYETKKND) show a composition bias toward basic and acidic residues. A disordered region spans residues 1-21 (MDSQYETKKNDPNAIMPYPES). Topologically, residues 1–56 (MDSQYETKKNDPNAIMPYPESNDEHVGEVRGLGGGIMDKEPEAQEGHAKFHRLGWK) are extracellular. Helical transmembrane passes span 57 to 77 (RLTVVLIVEAIALGSLSLPGA) and 78 to 98 (FATLGMVPGVILSVGMGLICI). Over 99–131 (YTAHVIGQTKLKHPEIAHYADVGRVMFGRWGYE) the chain is Extracellular. A helical membrane pass occupies residues 132–152 (IISFMFVLQLIFIVGSHVLTG). The Cytoplasmic portion of the chain corresponds to 153–168 (TIMWGTITDNGNGTCS). The next 2 helical transmembrane spans lie at 169–189 (LVFGIVSAIILFLLAIPPSFA) and 191–211 (VAILGYIDFVSICAAILITMI). At 212 to 236 (ATGIRSSHQEGGLAAVPWSCWPKED) the chain is on the cytoplasmic side. Residues 237–257 (LSLAEGFIAVSNIVFAYSFAM) form a helical membrane-spanning segment. Topologically, residues 258-275 (CQFSFMDEMHTPSDYKKS) are extracellular. A helical transmembrane segment spans residues 276–296 (IVALGLIEIFIYTVTGGVVYA). Topologically, residues 297–316 (FVGPEVQSPALLSAGPLLAK) are cytoplasmic. A helical membrane pass occupies residues 317 to 337 (VAFGIALPVIFISGSINTVVV). The Extracellular segment spans residues 338–357 (SRYLIERIWPNNVIRYVNTP). A helical transmembrane segment spans residues 358 to 378 (AGWMVWLGFDFGITLIAWVIA). Topologically, residues 379–386 (EAIPFFSD) are cytoplasmic. The chain crosses the membrane as a helical span at residues 387–407 (LLAICSALFISGFSFYFPALM). At 408–427 (YFKITRNDAKSQGKKYFLDA) the chain is on the extracellular side. Residues 428-448 (LNMLCFVIGMGILGIGTYAAI) traverse the membrane as a helical segment. Residues 449–470 (QDIMDRYDHGKVSKPYSCAPLA) are Cytoplasmic-facing.

The protein belongs to the amino acid/polyamine transporter 2 family.

Its subcellular location is the membrane. Required for the transport of neutral aliphatic and aromatic amino acids via the N system. The sequence is that of N amino acid transport system protein (mtr) from Neurospora crassa (strain ATCC 24698 / 74-OR23-1A / CBS 708.71 / DSM 1257 / FGSC 987).